The primary structure comprises 269 residues: Eukaryotic translation initiation factor 3 subunit G-1 (269 aa).

The 79-residue stretch at 188 to 266 (AAIRISNLSE…LILSVEWSKP (79 aa)) folds into the RRM domain.

It belongs to the eIF-3 subunit G family. Component of the eukaryotic translation initiation factor 3 (eIF-3) complex. The eIF-3 complex interacts with pix.

The protein resides in the cytoplasm. In terms of biological role, RNA-binding component of the eukaryotic translation initiation factor 3 (eIF-3) complex, which is involved in protein synthesis of a specialized repertoire of mRNAs and, together with other initiation factors, stimulates binding of mRNA and methionyl-tRNAi to the 40S ribosome. The eIF-3 complex specifically targets and initiates translation of a subset of mRNAs involved in cell proliferation. This subunit can bind 18S rRNA. This is Eukaryotic translation initiation factor 3 subunit G-1 from Drosophila grimshawi (Hawaiian fruit fly).